A 348-amino-acid polypeptide reads, in one-letter code: Protein RecA (348 aa).

An ATP-binding site is contributed by 69–76 (GPESSGKT).

Belongs to the RecA family.

The protein resides in the cytoplasm. Its function is as follows. Can catalyze the hydrolysis of ATP in the presence of single-stranded DNA, the ATP-dependent uptake of single-stranded DNA by duplex DNA, and the ATP-dependent hybridization of homologous single-stranded DNAs. It interacts with LexA causing its activation and leading to its autocatalytic cleavage. The polypeptide is Protein RecA (Picosynechococcus sp. (strain ATCC 27264 / PCC 7002 / PR-6) (Agmenellum quadruplicatum)).